The following is a 158-amino-acid chain: RNA pyrophosphohydrolase (158 aa).

Residues 6–149 (GYRLNVGIVL…KRHVYRKVMK (144 aa)) form the Nudix hydrolase domain. Residues 38-59 (GGINIGETPEQAMYRELFEEIG) carry the Nudix box motif.

Belongs to the Nudix hydrolase family. RppH subfamily. A divalent metal cation is required as a cofactor.

Accelerates the degradation of transcripts by removing pyrophosphate from the 5'-end of triphosphorylated RNA, leading to a more labile monophosphorylated state that can stimulate subsequent ribonuclease cleavage. The polypeptide is RNA pyrophosphohydrolase (Blochmanniella floridana).